The primary structure comprises 173 residues: Small ribosomal subunit protein uS13 (173 aa).

Positions 130–143 (GVRHKRGQKVRGQR) are enriched in basic residues. The segment at 130-155 (GVRHKRGQKVRGQRTKSTGRTEGTIG) is disordered.

It belongs to the universal ribosomal protein uS13 family. In terms of assembly, part of the 30S ribosomal subunit. Forms a loose heterodimer with protein S19. Forms two bridges to the 50S subunit in the 70S ribosome.

Functionally, located at the top of the head of the 30S subunit, it contacts several helices of the 16S rRNA. In the 70S ribosome it contacts the 23S rRNA (bridge B1a) and protein L5 of the 50S subunit (bridge B1b), connecting the 2 subunits; these bridges are implicated in subunit movement. This is Small ribosomal subunit protein uS13 from Haloquadratum walsbyi (strain DSM 16790 / HBSQ001).